A 367-amino-acid chain; its full sequence is MSEHQSLPAPEASTEVRVAIVGVGNCASSLVQGVEYYYNADDTSTVPGLMHVRFGPYHVRDVKFVAAFDVDAKKVGFDLSDAIFASENNTIKIADVAPTNVIVQRGPTLDGIGKYYADTIELSDAEPVDVVQALKEAKVDVLVSYLPVGSEEADKFYAQCAIDAGVAFVNALPVFIASDPVWAKKFTDAGVPIVGDDIKSQVGATITHRVLAKLFEDRGVQLDRTMQLNVGGNMDFLNMLERERLESKKISKTQAVTSNLKREFKTKDVHIGPSDHVGWLDDRKWAYVRLEGRAFGDVPLNLEYKLEVWDSPNSAGVIIDAVRAAKIAKDRGIGGPVIPASAYLMKSPPEQLPDDIARAQLEEFIIG.

NAD(+) is bound by residues Asp78, Ala137, Tyr157, Ser200, Asp235, and Lys248.

The protein belongs to the myo-inositol 1-phosphate synthase family. The cofactor is NAD(+).

The enzyme catalyses D-glucose 6-phosphate = 1D-myo-inositol 3-phosphate. Functionally, key enzyme in myo-inositol biosynthesis pathway that catalyzes the conversion of glucose 6-phosphate to 1D-myo-inositol 3-phosphate in a NAD-dependent manner. In Mycobacterium tuberculosis (strain CDC 1551 / Oshkosh), this protein is Inositol-3-phosphate synthase (ino1).